We begin with the raw amino-acid sequence, 347 residues long: S-adenosylmethionine:tRNA ribosyltransferase-isomerase (347 aa).

Belongs to the QueA family. Monomer.

The protein resides in the cytoplasm. It carries out the reaction 7-aminomethyl-7-carbaguanosine(34) in tRNA + S-adenosyl-L-methionine = epoxyqueuosine(34) in tRNA + adenine + L-methionine + 2 H(+). It functions in the pathway tRNA modification; tRNA-queuosine biosynthesis. Its function is as follows. Transfers and isomerizes the ribose moiety from AdoMet to the 7-aminomethyl group of 7-deazaguanine (preQ1-tRNA) to give epoxyqueuosine (oQ-tRNA). The polypeptide is S-adenosylmethionine:tRNA ribosyltransferase-isomerase (Xylella fastidiosa (strain 9a5c)).